A 362-amino-acid polypeptide reads, in one-letter code: Peptide chain release factor 1 (362 aa).

Q240 is subject to N5-methylglutamine.

This sequence belongs to the prokaryotic/mitochondrial release factor family. Post-translationally, methylated by PrmC. Methylation increases the termination efficiency of RF1.

The protein resides in the cytoplasm. Peptide chain release factor 1 directs the termination of translation in response to the peptide chain termination codons UAG and UAA. The protein is Peptide chain release factor 1 of Bifidobacterium longum (strain NCC 2705).